A 373-amino-acid polypeptide reads, in one-letter code: Putative glutamate--cysteine ligase 2 (373 aa).

Belongs to the glutamate--cysteine ligase type 2 family. YbdK subfamily. Homodimer.

It carries out the reaction L-cysteine + L-glutamate + ATP = gamma-L-glutamyl-L-cysteine + ADP + phosphate + H(+). Functionally, ATP-dependent carboxylate-amine ligase which exhibits weak glutamate--cysteine ligase activity. This is Putative glutamate--cysteine ligase 2 from Enterobacter sp. (strain 638).